The following is a 139-amino-acid chain: MFCTFCLKDRNYYMFKLFKDYWPTCTTECQICLEKIDDNGGIVAMPDTGMLNLEKMFHEQCIQRWRREHTRDPFNRVIKYYFNFPPKTLEECNVMLRETKGSIGDHEIDRVYKRVYQRVTQEDALDIELDFRHFFKMQS.

It localises to the host cytoplasm. It is found in the host nucleus. Functionally, plays a role in nucleocapsid assembly. The protein is Protein AC53 (AC53) of Lepidoptera (butterflies and moths).